The primary structure comprises 147 residues: Endoribonuclease YbeY (147 aa).

The Zn(2+) site is built by His-108, His-112, and His-118.

It belongs to the endoribonuclease YbeY family. Zn(2+) is required as a cofactor.

The protein localises to the cytoplasm. In terms of biological role, single strand-specific metallo-endoribonuclease involved in late-stage 70S ribosome quality control and in maturation of the 3' terminus of the 16S rRNA. This chain is Endoribonuclease YbeY, found in Sulfurovum sp. (strain NBC37-1).